Reading from the N-terminus, the 239-residue chain is Tumor necrosis factor ligand superfamily member 14 (239 aa).

Residues 1-37 are Cytoplasmic-facing; it reads MESVVQPSVFVVDGQTDIPFRRLEQNHRRRRCGTVQV. Residues 38–58 form a helical; Signal-anchor for type II membrane protein membrane-spanning segment; it reads SLALVLLLGAGLATQGWFLLR. The Extracellular portion of the chain corresponds to 59 to 239; it reads LHQRLGDIVA…TRSYFGAFMV (181 aa). One can recognise a THD domain in the interval 92-239; sequence PAAHLTGANA…TRSYFGAFMV (148 aa). A glycan (N-linked (GlcNAc...) asparagine) is linked at N100. C152 and C187 are joined by a disulfide. The N-linked (GlcNAc...) asparagine glycan is linked to N191.

Belongs to the tumor necrosis factor family. As to quaternary structure, homotrimer. Interacts with TNFRSF14. Post-translationally, the soluble form derives from the membrane form by proteolytic processing.

The protein resides in the cell membrane. The protein localises to the secreted. Cytokine that binds to TNFRSF3/LTBR. Binding to the decoy receptor TNFRSF6B modulates its effects. Activates NFKB and stimulates the proliferation of T-cells. Acts as a ligand for TNFRSF14/HVEM. Upon binding to TNFRSF14/HVEM, delivers costimulatory signals to T cells, leading to T cell proliferation and IFNG production. In Mus musculus (Mouse), this protein is Tumor necrosis factor ligand superfamily member 14 (Tnfsf14).